The following is a 224-amino-acid chain: Perchlorate reductase assembly chaperone protein (224 aa).

It belongs to the type II DMSO reductase enzyme chaperone family.

The protein localises to the cytoplasm. In terms of biological role, may function as a system-specific molybdenum chaperone protein essential for the assembly of the perchlorate reductase PcrAB complex prior to its periplasmic translocation via the Tat pathway. The chain is Perchlorate reductase assembly chaperone protein (pcrD) from Dechloromonas aromatica (strain RCB).